Consider the following 166-residue polypeptide: CDP-archaeol synthase (166 aa).

The next 4 helical transmembrane spans lie at 42–62 (FFGGVVSGVLVGLIEIWAATA), 73–93 (FLSVTLLATGALLGDLAKSFL), 104–124 (SWFLADQYDLVVGSFLLILIF), and 128–148 (WLFGTITLPIAVWIVVMTPLL).

This sequence belongs to the CDP-archaeol synthase family. Mg(2+) is required as a cofactor.

The protein localises to the cell membrane. The enzyme catalyses 2,3-bis-O-(geranylgeranyl)-sn-glycerol 1-phosphate + CTP + H(+) = CDP-2,3-bis-O-(geranylgeranyl)-sn-glycerol + diphosphate. The protein operates within membrane lipid metabolism; glycerophospholipid metabolism. Its function is as follows. Catalyzes the formation of CDP-2,3-bis-(O-geranylgeranyl)-sn-glycerol (CDP-archaeol) from 2,3-bis-(O-geranylgeranyl)-sn-glycerol 1-phosphate (DGGGP) and CTP. This reaction is the third ether-bond-formation step in the biosynthesis of archaeal membrane lipids. This chain is CDP-archaeol synthase, found in Methanoculleus marisnigri (strain ATCC 35101 / DSM 1498 / JR1).